Consider the following 126-residue polypeptide: Chorion class B protein M1768 (126 aa).

Residues 1-17 (YGGLGYGGLGGGCGRGF) form a left arm region. The tract at residues 18-86 (SGGGLPVATA…GNGAVGITRE (69 aa)) is central domain. Positions 87-126 (GGFGYGAGYGDGYGLGFGGYGGGYGLGYGGYGGCGCSWGY) are right arm (Gly-rich tandem repeats).

The protein belongs to the chorion protein family.

This protein is one of many from the eggshell of the silk moth. This chain is Chorion class B protein M1768, found in Bombyx mori (Silk moth).